The sequence spans 456 residues: Adenylosuccinate synthetase isozyme 2 (456 aa).

The segment at 1 to 24 (MAFAETYPAASSLPNGDCGRPRAR) is disordered. GTP contacts are provided by residues 39–45 (GDEGKGK) and 67–69 (GHT). Aspartate 40 acts as the Proton acceptor in catalysis. Residues aspartate 40 and glycine 67 each contribute to the Mg(2+) site. Aspartate 40 is a binding site for substrate. IMP-binding positions include 40 to 43 (DEGK), 65 to 68 (NAGH), threonine 162, arginine 176, asparagine 255, threonine 270, and arginine 334. Histidine 68 (proton donor) is an active-site residue. 330 to 336 (VTTGRKR) lines the substrate pocket. GTP is bound by residues arginine 336, 362–364 (KLD), and 444–447 (GVGK).

This sequence belongs to the adenylosuccinate synthetase family. As to quaternary structure, homodimer. Mg(2+) serves as cofactor.

It is found in the cytoplasm. It localises to the mitochondrion. It catalyses the reaction IMP + L-aspartate + GTP = N(6)-(1,2-dicarboxyethyl)-AMP + GDP + phosphate + 2 H(+). Its pathway is purine metabolism; AMP biosynthesis via de novo pathway; AMP from IMP: step 1/2. Its activity is regulated as follows. Inhibited competitively by AMP and IMP and non-competitively by fructose 1,6-bisphosphate. Plays an important role in the de novo pathway and in the salvage pathway of purine nucleotide biosynthesis. Catalyzes the first committed step in the biosynthesis of AMP from IMP. This Homo sapiens (Human) protein is Adenylosuccinate synthetase isozyme 2.